We begin with the raw amino-acid sequence, 653 residues long: Calpain-10 (653 aa).

One can recognise a Calpain catalytic domain in the interval 13–321 (LFRDAAFPAA…FDEITIGYPI (309 aa)). Residues C73, H238, and N263 contribute to the active site. 2 domain III regions span residues 322–494 (TEAG…VSLS) and 513–653 (EWGT…PSWQ).

This sequence belongs to the peptidase C2 family.

Its function is as follows. Calcium-regulated non-lysosomal thiol-protease which catalyzes limited proteolysis of substrates involved in cytoskeletal remodeling and signal transduction. May play a role in insulin-stimulated glucose uptake. This is Calpain-10 (CAPN10) from Macaca fascicularis (Crab-eating macaque).